Consider the following 302-residue polypeptide: UDP-3-O-acyl-N-acetylglucosamine deacetylase (302 aa).

Zn(2+) contacts are provided by histidine 82, histidine 238, and aspartate 242. Histidine 265 functions as the Proton donor in the catalytic mechanism.

It belongs to the LpxC family. It depends on Zn(2+) as a cofactor.

It catalyses the reaction a UDP-3-O-[(3R)-3-hydroxyacyl]-N-acetyl-alpha-D-glucosamine + H2O = a UDP-3-O-[(3R)-3-hydroxyacyl]-alpha-D-glucosamine + acetate. Its pathway is glycolipid biosynthesis; lipid IV(A) biosynthesis; lipid IV(A) from (3R)-3-hydroxytetradecanoyl-[acyl-carrier-protein] and UDP-N-acetyl-alpha-D-glucosamine: step 2/6. Its function is as follows. Catalyzes the hydrolysis of UDP-3-O-myristoyl-N-acetylglucosamine to form UDP-3-O-myristoylglucosamine and acetate, the committed step in lipid A biosynthesis. The protein is UDP-3-O-acyl-N-acetylglucosamine deacetylase of Leptospira biflexa serovar Patoc (strain Patoc 1 / Ames).